A 518-amino-acid chain; its full sequence is GMP synthase [glutamine-hydrolyzing] (518 aa).

Residues 13-203 form the Glutamine amidotransferase type-1 domain; sequence KIIVLDFGSQ…ALNVCGCKGD (191 aa). Cys-90 functions as the Nucleophile in the catalytic mechanism. Catalysis depends on residues His-177 and Glu-179. The region spanning 204–393 is the GMPS ATP-PPase domain; sequence WTMENFSEVE…LGMPDAIVWR (190 aa). 231 to 237 contacts ATP; that stretch reads SGGVDSS.

As to quaternary structure, homodimer.

It catalyses the reaction XMP + L-glutamine + ATP + H2O = GMP + L-glutamate + AMP + diphosphate + 2 H(+). Its pathway is purine metabolism; GMP biosynthesis; GMP from XMP (L-Gln route): step 1/1. Catalyzes the synthesis of GMP from XMP. This is GMP synthase [glutamine-hydrolyzing] from Listeria welshimeri serovar 6b (strain ATCC 35897 / DSM 20650 / CCUG 15529 / CIP 8149 / NCTC 11857 / SLCC 5334 / V8).